A 1149-amino-acid chain; its full sequence is ATP-dependent helicase/deoxyribonuclease subunit B (1149 aa).

ATP is bound at residue Gly8 to Ser15. Residues Cys788, Cys1106, Cys1109, and Cys1115 each coordinate [4Fe-4S] cluster.

This sequence belongs to the helicase family. AddB/RexB type 1 subfamily. As to quaternary structure, heterodimer of AddA and AddB. Requires Mg(2+) as cofactor. [4Fe-4S] cluster is required as a cofactor.

Its function is as follows. The heterodimer acts as both an ATP-dependent DNA helicase and an ATP-dependent, dual-direction single-stranded exonuclease. Recognizes the chi site generating a DNA molecule suitable for the initiation of homologous recombination. The AddB subunit has 5' -&gt; 3' nuclease activity but not helicase activity. This chain is ATP-dependent helicase/deoxyribonuclease subunit B, found in Ruminiclostridium cellulolyticum (strain ATCC 35319 / DSM 5812 / JCM 6584 / H10) (Clostridium cellulolyticum).